The primary structure comprises 521 residues: Bifunctional purine biosynthesis protein PurH (521 aa).

The MGS-like domain maps to 1–145; the sequence is MIKQALISVS…KNHRDVTVVV (145 aa).

Belongs to the PurH family.

The enzyme catalyses (6R)-10-formyltetrahydrofolate + 5-amino-1-(5-phospho-beta-D-ribosyl)imidazole-4-carboxamide = 5-formamido-1-(5-phospho-D-ribosyl)imidazole-4-carboxamide + (6S)-5,6,7,8-tetrahydrofolate. It carries out the reaction IMP + H2O = 5-formamido-1-(5-phospho-D-ribosyl)imidazole-4-carboxamide. Its pathway is purine metabolism; IMP biosynthesis via de novo pathway; 5-formamido-1-(5-phospho-D-ribosyl)imidazole-4-carboxamide from 5-amino-1-(5-phospho-D-ribosyl)imidazole-4-carboxamide (10-formyl THF route): step 1/1. It functions in the pathway purine metabolism; IMP biosynthesis via de novo pathway; IMP from 5-formamido-1-(5-phospho-D-ribosyl)imidazole-4-carboxamide: step 1/1. This chain is Bifunctional purine biosynthesis protein PurH, found in Burkholderia lata (strain ATCC 17760 / DSM 23089 / LMG 22485 / NCIMB 9086 / R18194 / 383).